An 85-amino-acid chain; its full sequence is uncharacterized protein (85 aa).

The protein belongs to the herpesviridae UL91 family.

This is an uncharacterized protein from Alcelaphine herpesvirus 1 (strain C500) (AlHV-1).